Consider the following 216-residue polypeptide: ATP-dependent Clp protease proteolytic subunit (216 aa).

Ser120 serves as the catalytic Nucleophile. Residue His145 is part of the active site.

Belongs to the peptidase S14 family. Fourteen ClpP subunits assemble into 2 heptameric rings which stack back to back to give a disk-like structure with a central cavity, resembling the structure of eukaryotic proteasomes.

It localises to the cytoplasm. The enzyme catalyses Hydrolysis of proteins to small peptides in the presence of ATP and magnesium. alpha-casein is the usual test substrate. In the absence of ATP, only oligopeptides shorter than five residues are hydrolyzed (such as succinyl-Leu-Tyr-|-NHMec, and Leu-Tyr-Leu-|-Tyr-Trp, in which cleavage of the -Tyr-|-Leu- and -Tyr-|-Trp bonds also occurs).. Cleaves peptides in various proteins in a process that requires ATP hydrolysis. Has a chymotrypsin-like activity. Plays a major role in the degradation of misfolded proteins. This chain is ATP-dependent Clp protease proteolytic subunit, found in Cupriavidus pinatubonensis (strain JMP 134 / LMG 1197) (Cupriavidus necator (strain JMP 134)).